Consider the following 73-residue polypeptide: Large ribosomal subunit protein bL31 (73 aa).

The Zn(2+) site is built by C16, C18, C36, and C39.

Belongs to the bacterial ribosomal protein bL31 family. Type A subfamily. Part of the 50S ribosomal subunit. It depends on Zn(2+) as a cofactor.

Binds the 23S rRNA. This Myxococcus xanthus (strain DK1622) protein is Large ribosomal subunit protein bL31.